The chain runs to 453 residues: MQVKETVADGLKREFEVNVPAADIDAQVDARLVDLKDKVKLNGFRPGKVPVSHLKRVYGRSVAAETIDKLVRETNDGIFAERGFRLATEPKITMPQDQKVVEDILAGKSDLNYTVAIEVVPTIELADFKSFSVEKPVVDVGDSDVDEAIKRIAEANRAYADKAEGAKAETGDRVTVSFKGTIDGVAFDGGTGEDIPVVIGSGSFIPGFEDQLAGIGVGETRTIKVSFPANYASDTLAGKPAEFETTATKVEAPQDVTIDDEFAKTLGMESLDKLKEAARARLGAEYAGATRLRVKRQLLDRLDETHKFDAPPSLVEQEFEVMWRSINAEMQQNGKSFADEDTTEEAAREEYRKIADRRVRLGLVLSEIGEKNKIQVTDDEVSRAVIERARQMPGREKEVWDFYRSNNEALAQLRAPIYEDKVVDYILELANVTEKKVTREELYKDDDADKTAA.

One can recognise a PPIase FKBP-type domain in the interval 171–256 (GDRVTVSFKG…ATKVEAPQDV (86 aa)).

This sequence belongs to the FKBP-type PPIase family. Tig subfamily.

Its subcellular location is the cytoplasm. It catalyses the reaction [protein]-peptidylproline (omega=180) = [protein]-peptidylproline (omega=0). Functionally, involved in protein export. Acts as a chaperone by maintaining the newly synthesized protein in an open conformation. Functions as a peptidyl-prolyl cis-trans isomerase. The sequence is that of Trigger factor from Rhodopseudomonas palustris (strain BisB5).